The primary structure comprises 343 residues: Phosphoribosylformylglycinamidine cyclo-ligase (343 aa).

The protein belongs to the AIR synthase family.

The protein resides in the cytoplasm. It catalyses the reaction 2-formamido-N(1)-(5-O-phospho-beta-D-ribosyl)acetamidine + ATP = 5-amino-1-(5-phospho-beta-D-ribosyl)imidazole + ADP + phosphate + H(+). It functions in the pathway purine metabolism; IMP biosynthesis via de novo pathway; 5-amino-1-(5-phospho-D-ribosyl)imidazole from N(2)-formyl-N(1)-(5-phospho-D-ribosyl)glycinamide: step 2/2. This chain is Phosphoribosylformylglycinamidine cyclo-ligase, found in Carboxydothermus hydrogenoformans (strain ATCC BAA-161 / DSM 6008 / Z-2901).